The sequence spans 279 residues: 3-methyl-2-oxobutanoate hydroxymethyltransferase (279 aa).

Mg(2+)-binding residues include aspartate 43 and aspartate 82. 3-methyl-2-oxobutanoate contacts are provided by residues 43–44 (DS), aspartate 82, and lysine 112. Position 114 (glutamate 114) interacts with Mg(2+). Residue glutamate 181 is the Proton acceptor of the active site.

It belongs to the PanB family. In terms of assembly, homodecamer; pentamer of dimers. Requires Mg(2+) as cofactor.

It is found in the cytoplasm. It carries out the reaction 3-methyl-2-oxobutanoate + (6R)-5,10-methylene-5,6,7,8-tetrahydrofolate + H2O = 2-dehydropantoate + (6S)-5,6,7,8-tetrahydrofolate. Its pathway is cofactor biosynthesis; (R)-pantothenate biosynthesis; (R)-pantoate from 3-methyl-2-oxobutanoate: step 1/2. Catalyzes the reversible reaction in which hydroxymethyl group from 5,10-methylenetetrahydrofolate is transferred onto alpha-ketoisovalerate to form ketopantoate. This Exiguobacterium sibiricum (strain DSM 17290 / CCUG 55495 / CIP 109462 / JCM 13490 / 255-15) protein is 3-methyl-2-oxobutanoate hydroxymethyltransferase.